The sequence spans 881 residues: Leucine--tRNA ligase (881 aa).

A 'HIGH' region motif is present at residues proline 48–histidine 58. The 'KMSKS' region signature appears at lysine 638–serine 642. Lysine 641 contacts ATP.

This sequence belongs to the class-I aminoacyl-tRNA synthetase family.

The protein localises to the cytoplasm. It carries out the reaction tRNA(Leu) + L-leucine + ATP = L-leucyl-tRNA(Leu) + AMP + diphosphate. This Herminiimonas arsenicoxydans protein is Leucine--tRNA ligase.